The sequence spans 603 residues: Phosphoribosylformylglycinamidine synthase subunit PurL (603 aa).

The active site involves histidine 32. Residues tyrosine 35 and lysine 68 each contribute to the ATP site. Position 70 (glutamate 70) interacts with Mg(2+). Substrate contacts are provided by residues 71-74 (SHNH) and arginine 93. Residue histidine 72 is the Proton acceptor of the active site. Aspartate 94 lines the Mg(2+) pocket. ATP-binding positions include aspartate 107 and 136-139 (GELR). Substrate-binding residues include glycine 189 and glutamine 208. Aspartate 236 contacts Mg(2+). 280–282 (ESQ) is a substrate binding site. The ATP site is built by glycine 388, lysine 429, asparagine 442, and glycine 477. Asparagine 478 contacts Mg(2+). Serine 480 lines the substrate pocket. Residues serine 549 and histidine 556 each contribute to the ATP site.

The protein belongs to the FGAMS family. In terms of assembly, monomer. Part of the FGAM synthase complex composed of 1 PurL, 1 PurQ and 2 PurS subunits.

Its subcellular location is the cytoplasm. It catalyses the reaction N(2)-formyl-N(1)-(5-phospho-beta-D-ribosyl)glycinamide + L-glutamine + ATP + H2O = 2-formamido-N(1)-(5-O-phospho-beta-D-ribosyl)acetamidine + L-glutamate + ADP + phosphate + H(+). The protein operates within purine metabolism; IMP biosynthesis via de novo pathway; 5-amino-1-(5-phospho-D-ribosyl)imidazole from N(2)-formyl-N(1)-(5-phospho-D-ribosyl)glycinamide: step 1/2. Its function is as follows. Part of the phosphoribosylformylglycinamidine synthase complex involved in the purines biosynthetic pathway. Catalyzes the ATP-dependent conversion of formylglycinamide ribonucleotide (FGAR) and glutamine to yield formylglycinamidine ribonucleotide (FGAM) and glutamate. The FGAM synthase complex is composed of three subunits. PurQ produces an ammonia molecule by converting glutamine to glutamate. PurL transfers the ammonia molecule to FGAR to form FGAM in an ATP-dependent manner. PurS interacts with PurQ and PurL and is thought to assist in the transfer of the ammonia molecule from PurQ to PurL. The sequence is that of Phosphoribosylformylglycinamidine synthase subunit PurL from Thermotoga maritima (strain ATCC 43589 / DSM 3109 / JCM 10099 / NBRC 100826 / MSB8).